We begin with the raw amino-acid sequence, 378 residues long: REST corepressor 3 (378 aa).

Positions 1-83 (MRVGAEYQAR…KSLADLPNFT (83 aa)) constitute an ELM2 domain. In terms of domain architecture, SANT spans 84 to 135 (PFPDEWTVEDKVLFEQAFSFHGKSFHRIQQMLPDKTIASLVKYYYSWKKTRS). The segment at 147–219 (LANRNNQGDS…SQRSKCRPPK (73 aa)) is disordered. Residues 162-184 (EPHPMDGNDSDYDPKKEAKKEGN) show a composition bias toward basic and acidic residues. The span at 205-217 (QHRHHSQRSKCRP) shows a compositional bias: basic residues. A coiled-coil region spans residues 238–273 (ANTILRRLDMELISLKRQVQNAKQVNSALKQKMEGG). The segment at 337–356 (TASSTSCCSCSPPSASAAPT) is disordered.

It belongs to the CoREST family.

The protein resides in the nucleus. In terms of biological role, may act as a component of a corepressor complex that represses transcription. The chain is REST corepressor 3 (RCOR3) from Gallus gallus (Chicken).